We begin with the raw amino-acid sequence, 479 residues long: Aspartyl/glutamyl-tRNA(Asn/Gln) amidotransferase subunit B (479 aa).

This sequence belongs to the GatB/GatE family. GatB subfamily. In terms of assembly, heterotrimer of A, B and C subunits.

It catalyses the reaction L-glutamyl-tRNA(Gln) + L-glutamine + ATP + H2O = L-glutaminyl-tRNA(Gln) + L-glutamate + ADP + phosphate + H(+). The catalysed reaction is L-aspartyl-tRNA(Asn) + L-glutamine + ATP + H2O = L-asparaginyl-tRNA(Asn) + L-glutamate + ADP + phosphate + 2 H(+). Functionally, allows the formation of correctly charged Asn-tRNA(Asn) or Gln-tRNA(Gln) through the transamidation of misacylated Asp-tRNA(Asn) or Glu-tRNA(Gln) in organisms which lack either or both of asparaginyl-tRNA or glutaminyl-tRNA synthetases. The reaction takes place in the presence of glutamine and ATP through an activated phospho-Asp-tRNA(Asn) or phospho-Glu-tRNA(Gln). In Alcanivorax borkumensis (strain ATCC 700651 / DSM 11573 / NCIMB 13689 / SK2), this protein is Aspartyl/glutamyl-tRNA(Asn/Gln) amidotransferase subunit B.